Here is a 408-residue protein sequence, read N- to C-terminus: Serine/threonine transporter SstT (408 aa).

9 helical membrane passes run 11-31, 43-63, 82-102, 141-161, 192-212, 216-236, 290-310, 316-336, and 363-383; these read LANG…VSLA, FLGS…VFIL, IVVL…LLSM, ALMT…GLAL, IGIF…AIAG, LLAV…PLIV, IPLG…VLTL, LGIQ…AISA, and VAMQ…AAET.

The protein belongs to the dicarboxylate/amino acid:cation symporter (DAACS) (TC 2.A.23) family.

It is found in the cell inner membrane. It catalyses the reaction L-serine(in) + Na(+)(in) = L-serine(out) + Na(+)(out). The catalysed reaction is L-threonine(in) + Na(+)(in) = L-threonine(out) + Na(+)(out). Functionally, involved in the import of serine and threonine into the cell, with the concomitant import of sodium (symport system). This chain is Serine/threonine transporter SstT, found in Shewanella sp. (strain MR-4).